A 140-amino-acid polypeptide reads, in one-letter code: uncharacterized protein (140 aa).

3 helical membrane passes run 42–62, 65–85, and 96–116; these read AFLFNFLPLLLLLAFLDIFAS, ASFLAAVLIKILVKSVFSALG, and RASDCLAALEFFDIFLAMLCF.

The protein localises to the membrane. This is an uncharacterized protein from Saccharomyces cerevisiae (strain ATCC 204508 / S288c) (Baker's yeast).